We begin with the raw amino-acid sequence, 560 residues long: Digoxin reductase (560 aa).

The segment at residues 1–48 is a signal peptide (tat-type signal); that stretch reads MEYGKCRGIERGMGRRDFLKAATLLGATAAGAGMLAGCAPKSASEAQA.

The protein belongs to the FAD-dependent oxidoreductase 2 family. As to quaternary structure, may form a membrane-associated complex with Cgr1. The cofactor is FAD. It depends on [4Fe-4S] cluster as a cofactor. Post-translationally, predicted to be exported by the Tat system. The position of the signal peptide cleavage has not been experimentally proven.

It localises to the cell membrane. It catalyses the reaction digoxin + 2 Fe(II)-[cytochrome c] + 3 H(+) = dihydrodigoxin + 2 Fe(III)-[cytochrome c]. It carries out the reaction digitoxin + 2 Fe(II)-[cytochrome c] + 3 H(+) = dihydrodigitoxin + 2 Fe(III)-[cytochrome c]. The enzyme catalyses digoxigenin + 2 Fe(II)-[cytochrome c] + 3 H(+) = dihydrodigoxigenin + 2 Fe(III)-[cytochrome c]. The catalysed reaction is ouabain + 2 Fe(II)-[cytochrome c] + 3 H(+) = dihydroouabain + 2 Fe(III)-[cytochrome c]. It catalyses the reaction ouabagenin + 2 Fe(II)-[cytochrome c] + 3 H(+) = dihydroouabagenin + 2 Fe(III)-[cytochrome c]. In terms of biological role, involved in the inactivation of the cardiac medication and plant natural product digoxin, thus decreasing drug efficacy and toxicity. Catalyzes the reduction of the alpha,beta-unsaturated butyrolactone ring of digoxin to the inactive metabolite dihydrodigoxin. Likely uses the cytochrome Cgr1 as the physiological electron donor, encoded by the adjacent gene in the locus. Only reduces digoxin and other cardenolide toxins, such as digitoxin, digoxigenin, ouabain and ouabagenin. Therefore is a specialized enzyme present in some gut bacteria E.lenta that protects their human host against ingested plant toxins. The polypeptide is Digoxin reductase (Eggerthella lenta (strain ATCC 25559 / DSM 2243 / CCUG 17323 / JCM 9979 / KCTC 3265 / NCTC 11813 / VPI 0255 / 1899 B) (Eubacterium lentum)).